The sequence spans 2155 residues: Conidial pigment polyketide synthase PfmaE (2155 aa).

Residues 8-245 are N-terminal acylcarrier protein transacylase domain (SAT); the sequence is LLFGDQSLDT…TAIPVYGPYH (238 aa). In terms of domain architecture, Ketosynthase family 3 (KS3) spans 381 to 813; sequence KCKLAIVGMA…GGNTGLLLED (433 aa). Active-site for beta-ketoacyl synthase activity residues include Cys-553, His-688, and His-731. The malonyl-CoA:ACP transacylase (MAT) domain stretch occupies residues 910-1231; sequence AFMFTGQGSH…LCTLHSAGLN (322 aa). Catalysis depends on Ser-1001, which acts as the For acyl/malonyl transferase activity. The tract at residues 1293–1608 is product template (PT) domain; the sequence is TTTVQKVVRE…PRKVLNVVLP (316 aa). Residues 1297 to 1428 form an N-terminal hotdog fold region; sequence QKVVREEVKG…CKVFFGDNEE (132 aa). A PKS/mFAS DH domain is found at 1297-1604; it reads QKVVREEVKG…FQAIPRKVLN (308 aa). Residue His-1329 is the Proton acceptor; for dehydratase activity of the active site. A C-terminal hotdog fold region spans residues 1455-1604; that stretch reads DASKIGRGLA…FQAIPRKVLN (150 aa). The active-site Proton donor; for dehydratase activity is the Asp-1516. Carrier domains are found at residues 1653-1730 and 1779-1856; these read LTKN…AQFE and GNVS…GIED. The residue at position 1690 (Ser-1690) is an O-(pantetheine 4'-phosphoryl)serine. Residues 1738 to 1782 are disordered; sequence EENAHSSASSDSADMETESNFTTPSDDSEKDEVKGDAPAADGNVS. Ser-1816 bears the O-(pantetheine 4'-phosphoryl)serine mark. Residues 1855–1892 form a disordered region; the sequence is EDKPKRAAPKSAKQEPAKPEPKVQGEAKAHTNPVDNYP. The span at 1866 to 1883 shows a compositional bias: basic and acidic residues; sequence AKQEPAKPEPKVQGEAKA. Residues 1911–2041 form a thioesterase (TE) domain region; it reads QLFMIPDGSG…LGEGDDAEAK (131 aa).

It functions in the pathway pigment biosynthesis; melanin biosynthesis. Non-reducing polyketide synthase; part of the gene cluster that mediates the biosynthesis of dihydroxynaphthalene (DHN)-melanin, a bluish-green pigment forming a dark layer in the conidial wall that protects the conidia from UV radiations. The first step of the pathway is the production of the pentaketide 1,3,6,8-tetrahydroxynaphthalene (1,3,6,8-THN or T4HN) by the polyketide synthase PfmaE though condensation of acetyl-CoA with malonyl-CoA. T4HN is not stable and easily oxidizes into the stable form flaviolin. T4HN is also substrate of the hydroxynaphthalene reductase PfmaG to yield scytalone. The scytalone dehydratase PfmaJ then reduces scytalone to 1,3,8-THN. 1,3,8-THN is then substrate of the hydroxynaphthalene reductase PfmaI to yield vermelone. Vermelone is further converted by the multicopper oxidase PfmaD to 1,8-DHN. Finally the laccase PFICI_06862 transforms 1,8-DHN to DHN-melanin. The roles of the 5-oxoprolinase PfmaA and the proline iminopeptidase PfmaB within the cluster have not been elucidated yet. This chain is Conidial pigment polyketide synthase PfmaE, found in Pestalotiopsis fici (strain W106-1 / CGMCC3.15140).